The following is a 425-amino-acid chain: WD repeat-containing protein jip5 (425 aa).

WD repeat units follow at residues 9 to 48, 72 to 111, 117 to 158, 221 to 262, and 318 to 355; these read PLSA…AASD, RHKG…VENK, EKNG…SKVS, ISST…DQDE, and DETE…ADRY. The interval 40–63 is disordered; sequence LPTDEAASDDDETSNASSRNGRGH. The interval 358–425 is disordered; sequence MPGEKRMYGD…LDSMESSVVY (68 aa). Acidic residues predominate over residues 367–385; that stretch reads DSDDSDEGDDSDDDSDDSD. Positions 395-404 are enriched in basic residues; sequence NKRKKTKAKG.

Belongs to the WD repeat WDR55 family.

It localises to the nucleus. The protein localises to the nucleolus. This is WD repeat-containing protein jip5 (jip5) from Aspergillus niger (strain ATCC MYA-4892 / CBS 513.88 / FGSC A1513).